The primary structure comprises 371 residues: Anhydro-N-acetylmuramic acid kinase (371 aa).

Residue 10–17 (GTSLDGID) participates in ATP binding.

Belongs to the anhydro-N-acetylmuramic acid kinase family.

It carries out the reaction 1,6-anhydro-N-acetyl-beta-muramate + ATP + H2O = N-acetyl-D-muramate 6-phosphate + ADP + H(+). It functions in the pathway amino-sugar metabolism; 1,6-anhydro-N-acetylmuramate degradation. The protein operates within cell wall biogenesis; peptidoglycan recycling. Catalyzes the specific phosphorylation of 1,6-anhydro-N-acetylmuramic acid (anhMurNAc) with the simultaneous cleavage of the 1,6-anhydro ring, generating MurNAc-6-P. Is required for the utilization of anhMurNAc either imported from the medium or derived from its own cell wall murein, and thus plays a role in cell wall recycling. The sequence is that of Anhydro-N-acetylmuramic acid kinase from Chromohalobacter salexigens (strain ATCC BAA-138 / DSM 3043 / CIP 106854 / NCIMB 13768 / 1H11).